The chain runs to 574 residues: ATP synthase subunit beta, mitochondrial (574 aa).

A mitochondrion-targeting transit peptide spans 1 to 26 (MLSSVRLAALRAGKTNSVFQAVRAFA). Residue 183–190 (GGAGVGKT) coordinates ATP.

The protein belongs to the ATPase alpha/beta chains family. F-type ATPases have 2 components, CF(1) - the catalytic core - and CF(0) - the membrane proton channel. CF(1) has five subunits: alpha(3), beta(3), gamma(1), delta(1), epsilon(1). CF(0) has three main subunits: a, b and c.

It localises to the mitochondrion. The protein resides in the mitochondrion inner membrane. It catalyses the reaction ATP + H2O + 4 H(+)(in) = ADP + phosphate + 5 H(+)(out). Its function is as follows. Mitochondrial membrane ATP synthase (F(1)F(0) ATP synthase or Complex V) produces ATP from ADP in the presence of a proton gradient across the membrane which is generated by electron transport complexes of the respiratory chain. F-type ATPases consist of two structural domains, F(1) - containing the extramembraneous catalytic core, and F(0) - containing the membrane proton channel, linked together by a central stalk and a peripheral stalk. During catalysis, ATP synthesis in the catalytic domain of F(1) is coupled via a rotary mechanism of the central stalk subunits to proton translocation. Subunits alpha and beta form the catalytic core in F(1). Rotation of the central stalk against the surrounding alpha(3)beta(3) subunits leads to hydrolysis of ATP in three separate catalytic sites on the beta subunits. This Chlamydomonas reinhardtii (Chlamydomonas smithii) protein is ATP synthase subunit beta, mitochondrial (ATP2).